A 629-amino-acid polypeptide reads, in one-letter code: ATP-dependent RNA helicase DeaD (629 aa).

The Q motif signature appears at 6 to 34; it reads TTFADLGLKAPILEALNDLGYEKPSPIQA. One can recognise a Helicase ATP-binding domain in the interval 37 to 208; the sequence is IPHLLNGRDV…RRFMKEPQEV (172 aa). 50–57 lines the ATP pocket; sequence AQTGSGKT. The DEAD box motif lies at 156–159; it reads DEAD. Residues 232–379 form the Helicase C-terminal domain; sequence KNEALVRFLE…EVELPNAELL (148 aa). 2 disordered regions span residues 438–481 and 560–629; these read LIVP…RERR and LGDA…GGDA. 2 stretches are compositionally biased toward basic and acidic residues: residues 446 to 481 and 568 to 629; these read MRPK…RERR and GGER…GGDA.

This sequence belongs to the DEAD box helicase family. DeaD/CsdA subfamily. Interacts with the 50S ribosomal subunit upon shifting to 15 degrees Celsius. Also found associated with the RNA degradosome at 15 degrees Celsius; binds RNase E (rne).

The protein resides in the cytoplasm. The enzyme catalyses ATP + H2O = ADP + phosphate + H(+). DEAD-box RNA helicase involved in various cellular processes at low temperature, including ribosome biogenesis, mRNA degradation and translation initiation. Exhibits RNA-stimulated ATP hydrolysis and RNA unwinding activity at low temperature. Involved in 50S ribosomal subunit assembly, acting after SrmB, and could also play a role in the biogenesis of the 30S ribosomal subunit. In addition, is involved in mRNA decay, via formation of a cold-shock degradosome with RNase E. Also stimulates translation of some mRNAs, probably at the level of initiation. This is ATP-dependent RNA helicase DeaD from Escherichia coli (strain K12).